The following is a 199-amino-acid chain: Interferon kappa (199 aa).

A signal peptide spans 1-21 (MTPKFLWLVALVALYIPPIQS). 2 disulfides stabilise this stretch: Cys-24–Cys-119 and Cys-49–Cys-162.

It belongs to the alpha/beta interferon family. In terms of tissue distribution, expressed at low levels in peritoneal macrophages.

Its subcellular location is the secreted. Its function is as follows. May play a role in the regulation of immune cell function. The sequence is that of Interferon kappa (Ifnk) from Mus musculus (Mouse).